A 332-amino-acid chain; its full sequence is 4-hydroxy-3-methylbut-2-enyl diphosphate reductase (332 aa).

A [4Fe-4S] cluster-binding site is contributed by C13. 2 residues coordinate (2E)-4-hydroxy-3-methylbut-2-enyl diphosphate: H41 and H75. Residues H41 and H75 each coordinate dimethylallyl diphosphate. Isopentenyl diphosphate is bound by residues H41 and H75. C97 is a [4Fe-4S] cluster binding site. H125 is a binding site for (2E)-4-hydroxy-3-methylbut-2-enyl diphosphate. H125 is a binding site for dimethylallyl diphosphate. H125 is an isopentenyl diphosphate binding site. The Proton donor role is filled by E127. A (2E)-4-hydroxy-3-methylbut-2-enyl diphosphate-binding site is contributed by T168. C229 provides a ligand contact to [4Fe-4S] cluster. S257, S258, N259, and S306 together coordinate (2E)-4-hydroxy-3-methylbut-2-enyl diphosphate. Residues S257, S258, N259, and S306 each contribute to the dimethylallyl diphosphate site. Isopentenyl diphosphate contacts are provided by S257, S258, N259, and S306.

This sequence belongs to the IspH family. [4Fe-4S] cluster serves as cofactor.

The enzyme catalyses isopentenyl diphosphate + 2 oxidized [2Fe-2S]-[ferredoxin] + H2O = (2E)-4-hydroxy-3-methylbut-2-enyl diphosphate + 2 reduced [2Fe-2S]-[ferredoxin] + 2 H(+). It catalyses the reaction dimethylallyl diphosphate + 2 oxidized [2Fe-2S]-[ferredoxin] + H2O = (2E)-4-hydroxy-3-methylbut-2-enyl diphosphate + 2 reduced [2Fe-2S]-[ferredoxin] + 2 H(+). The protein operates within isoprenoid biosynthesis; dimethylallyl diphosphate biosynthesis; dimethylallyl diphosphate from (2E)-4-hydroxy-3-methylbutenyl diphosphate: step 1/1. It participates in isoprenoid biosynthesis; isopentenyl diphosphate biosynthesis via DXP pathway; isopentenyl diphosphate from 1-deoxy-D-xylulose 5-phosphate: step 6/6. Functionally, catalyzes the conversion of 1-hydroxy-2-methyl-2-(E)-butenyl 4-diphosphate (HMBPP) into a mixture of isopentenyl diphosphate (IPP) and dimethylallyl diphosphate (DMAPP). Acts in the terminal step of the DOXP/MEP pathway for isoprenoid precursor biosynthesis. The polypeptide is 4-hydroxy-3-methylbut-2-enyl diphosphate reductase (Chlorobaculum parvum (strain DSM 263 / NCIMB 8327) (Chlorobium vibrioforme subsp. thiosulfatophilum)).